Reading from the N-terminus, the 725-residue chain is Catalase-peroxidase (725 aa).

The segment at residues 90-213 is a cross-link (tryptophyl-tyrosyl-methioninium (Trp-Tyr) (with M-239)); it reads WHSAGTYRTG…LAAVQMGLIY (124 aa). The active-site Proton acceptor is the His-91. A cross-link (tryptophyl-tyrosyl-methioninium (Tyr-Met) (with W-90)) is located at residues 213–239; it reads YVNPEGPNGNPDPVAAAKDIRETFARM. His-254 is a binding site for heme b.

The protein belongs to the peroxidase family. Peroxidase/catalase subfamily. In terms of assembly, homodimer or homotetramer. It depends on heme b as a cofactor. Post-translationally, formation of the three residue Trp-Tyr-Met cross-link is important for the catalase, but not the peroxidase activity of the enzyme.

It catalyses the reaction H2O2 + AH2 = A + 2 H2O. It carries out the reaction 2 H2O2 = O2 + 2 H2O. Functionally, bifunctional enzyme with both catalase and broad-spectrum peroxidase activity. This Hahella chejuensis (strain KCTC 2396) protein is Catalase-peroxidase.